Reading from the N-terminus, the 157-residue chain is Beta-defensin 125 (157 aa).

A signal peptide spans 1-20 (MNILMLTFIICGLLTQVTKG). Disulfide bonds link Cys-27/Cys-55, Cys-35/Cys-49, and Cys-39/Cys-56. The disordered stretch occupies residues 109–157 (GETMTPETNTPETTMPPPETTTPETTMPPSETATSETMPPPSQRALTHN). Low complexity-rich tracts occupy residues 110 to 121 (ETMTPETNTPET) and 129 to 145 (TTPE…TSET).

This sequence belongs to the beta-defensin family.

The protein localises to the secreted. Functionally, has antibacterial activity. This chain is Beta-defensin 125 (DEFB125), found in Pan troglodytes (Chimpanzee).